The following is a 201-amino-acid chain: Lipopolysaccharide core heptose(II)-phosphate phosphatase (201 aa).

The first 35 residues, 1 to 35, serve as a signal peptide directing secretion; it reads MLAFTLRFIKNKRYLATLAGALVIIAGLTSQHAWS.

The protein belongs to the phosphoglycerate mutase family. Ais subfamily.

The protein resides in the periplasm. Its pathway is bacterial outer membrane biogenesis; lipopolysaccharide metabolism. Functionally, catalyzes the dephosphorylation of heptose(II) of the outer membrane lipopolysaccharide core. The chain is Lipopolysaccharide core heptose(II)-phosphate phosphatase from Salmonella heidelberg (strain SL476).